Here is a 69-residue protein sequence, read N- to C-terminus: Putative membrane protein insertion efficiency factor (69 aa).

Belongs to the UPF0161 family.

The protein resides in the cell membrane. Functionally, could be involved in insertion of integral membrane proteins into the membrane. This chain is Putative membrane protein insertion efficiency factor, found in Thermomicrobium roseum (strain ATCC 27502 / DSM 5159 / P-2).